The chain runs to 75 residues: Putative sulfur carrier protein MJ0990 (75 aa).

Residue Cys-15 is the Cysteine persulfide intermediate of the active site.

This sequence belongs to the sulfur carrier protein TusA family.

This is Putative sulfur carrier protein MJ0990 from Methanocaldococcus jannaschii (strain ATCC 43067 / DSM 2661 / JAL-1 / JCM 10045 / NBRC 100440) (Methanococcus jannaschii).